Consider the following 326-residue polypeptide: GTP 3',8-cyclase (326 aa).

In terms of domain architecture, Radical SAM core spans 7-240; that stretch reads AFARKFYYLR…AQVFHHSDYQ (234 aa). Position 16 (Arg16) interacts with GTP. Positions 23 and 27 each coordinate [4Fe-4S] cluster. Tyr29 is an S-adenosyl-L-methionine binding site. Position 30 (Cys30) interacts with [4Fe-4S] cluster. Arg65 contributes to the GTP binding site. Residue Gly69 participates in S-adenosyl-L-methionine binding. Thr96 contacts GTP. Ser120 is an S-adenosyl-L-methionine binding site. Lys157 provides a ligand contact to GTP. S-adenosyl-L-methionine is bound at residue Met191. Cys254 and Cys257 together coordinate [4Fe-4S] cluster. 259-261 lines the GTP pocket; the sequence is RLR. Cys271 provides a ligand contact to [4Fe-4S] cluster.

It belongs to the radical SAM superfamily. MoaA family. In terms of assembly, monomer and homodimer. [4Fe-4S] cluster is required as a cofactor.

It catalyses the reaction GTP + AH2 + S-adenosyl-L-methionine = (8S)-3',8-cyclo-7,8-dihydroguanosine 5'-triphosphate + 5'-deoxyadenosine + L-methionine + A + H(+). The protein operates within cofactor biosynthesis; molybdopterin biosynthesis. Functionally, catalyzes the cyclization of GTP to (8S)-3',8-cyclo-7,8-dihydroguanosine 5'-triphosphate. The sequence is that of GTP 3',8-cyclase from Yersinia pestis.